A 117-amino-acid chain; its full sequence is Virion membrane protein OPG147 (117 aa).

A helical; Signal-anchor for type III membrane protein membrane pass occupies residues 1 to 21 (MITLFLILCYFILIFNIIVPA). Residues 22–117 (ISEKMRRERA…RAYSDLFFTT (96 aa)) lie on the Virion surface side of the membrane.

This sequence belongs to the orthopoxvirus OPG147 family. In terms of assembly, part of a stable entry-fusion complex (EFC) which is at least composed of proteins OPG143, OPG147, OPG155, OPG086, OPG094, OPG107, OPG104, and OPG099. Formation of the viral membrane is necessary for the assembly of the complex. Contains two intramolecular disulfide bonds. They are created by the viral disulfide bond formation pathway, a poxvirus-specific pathway that operates on the cytoplasmic side of the MV membranes.

It is found in the virion membrane. In terms of biological role, envelope protein part of the entry-fusion complex responsible for the virus membrane fusion with host cell membrane during virus entry. Also plays a role in cell-cell fusion (syncytium formation). This is Virion membrane protein OPG147 (OPG147) from Homo sapiens (Human).